A 179-amino-acid chain; its full sequence is MAETATIARPYAEALFRVASEAGNLGAWSELVSEMGQIAANPDIKALADDPNVPGDKLGDLFLSVVKSPVNDEARRFVKLLVENNRLTVMPEVAEQFHALKNAREGSSDVEITSAFPLDGQPLNDLVAALERKFGRKLYAKVAVDPSLIGGVSVKVGDEVLDTSVRARLAAMQTALTAV.

The protein belongs to the ATPase delta chain family. F-type ATPases have 2 components, F(1) - the catalytic core - and F(0) - the membrane proton channel. F(1) has five subunits: alpha(3), beta(3), gamma(1), delta(1), epsilon(1). F(0) has three main subunits: a(1), b(2) and c(10-14). The alpha and beta chains form an alternating ring which encloses part of the gamma chain. F(1) is attached to F(0) by a central stalk formed by the gamma and epsilon chains, while a peripheral stalk is formed by the delta and b chains.

The protein localises to the cell inner membrane. F(1)F(0) ATP synthase produces ATP from ADP in the presence of a proton or sodium gradient. F-type ATPases consist of two structural domains, F(1) containing the extramembraneous catalytic core and F(0) containing the membrane proton channel, linked together by a central stalk and a peripheral stalk. During catalysis, ATP synthesis in the catalytic domain of F(1) is coupled via a rotary mechanism of the central stalk subunits to proton translocation. Its function is as follows. This protein is part of the stalk that links CF(0) to CF(1). It either transmits conformational changes from CF(0) to CF(1) or is implicated in proton conduction. The polypeptide is ATP synthase subunit delta (Cupriavidus pinatubonensis (strain JMP 134 / LMG 1197) (Cupriavidus necator (strain JMP 134))).